The sequence spans 255 residues: NAD kinase (255 aa).

Asp-44 functions as the Proton acceptor in the catalytic mechanism. NAD(+) contacts are provided by residues 44 to 45 (DG), His-49, 114 to 115 (NE), Asp-144, Ala-152, 155 to 160 (SAYNLS), and Gln-216.

This sequence belongs to the NAD kinase family. A divalent metal cation serves as cofactor.

It localises to the cytoplasm. It catalyses the reaction NAD(+) + ATP = ADP + NADP(+) + H(+). Its function is as follows. Involved in the regulation of the intracellular balance of NAD and NADP, and is a key enzyme in the biosynthesis of NADP. Catalyzes specifically the phosphorylation on 2'-hydroxyl of the adenosine moiety of NAD to yield NADP. This is NAD kinase from Rickettsia prowazekii (strain Madrid E).